Here is a 2190-residue protein sequence, read N- to C-terminus: Highly-reducing polyketide synthase 1 (2190 aa).

In terms of domain architecture, Ketosynthase family 3 (KS3) spans 6 to 431 (LTPVAIVGYA…GANAHVVLGA (426 aa)). Active-site for beta-ketoacyl synthase activity residues include C179, H315, and H355. The Malonyl-CoA:ACP transacylase (MAT) domain occupies 541–857 (FVFTGQGAQW…VSVLARGQNA (317 aa)). Residues 925–1061 (NDLLGSLADW…GLVGVRNSPA (137 aa)) form an N-terminal hotdog fold region. The region spanning 925-1246 (NDLLGSLADW…MTPLRESSGS (322 aa)) is the PKS/mFAS DH domain. Catalysis depends on H957, which acts as the Proton acceptor; for dehydratase activity. Residues 1089-1246 (TETVDVQAMY…MTPLRESSGS (158 aa)) form a C-terminal hotdog fold region. Catalysis depends on D1154, which acts as the Proton donor; for dehydratase activity. Residues 1494 to 1804 (GSLDSFYFVD…SGKSMGKLVI (311 aa)) enclose the Enoyl reductase (ER) domain. The 178-residue stretch at 1828-2005 (ASYLIVGGTG…GTSLDLTAVS (178 aa)) folds into the Ketoreductase (KR) domain. The Carrier domain occupies 2107–2184 (KALEVLYGAL…ELAKLISKKS (78 aa)). S2144 bears the O-(pantetheine 4'-phosphoryl)serine mark.

Requires pantetheine 4'-phosphate as cofactor.

Functionally, highly-reducing polyketide synthase; part of the gene cluster that mediates the biosynthesis of liamocins, glycolipids (also called heavy oils) composed of a single mannitol or arabitol headgroup linked to either three, four or even six 3,5-dihydroxydecanoic ester tail-groups. Within the pathway, PKS1 is responsible for biosynthesis of 3,5-dihydroxydecanoic acid from acetyl-CoA and malonyl-CoA. A phosphopantetheine transferase (PPTase) activates the HR-PKS. The esterase EST1 then catalyzes ester bond formation between 3,5-dihydroxydecanoic acid and mannitol (provided by the mannitol-1-phosphate 5-dehydrogenase and the NADP-dependent mannitol dehydrogenase) or arabinol (provided by the L-arabinitol 4-dehydrogenase). The chain is Highly-reducing polyketide synthase 1 from Aureobasidium melanogenum (Aureobasidium pullulans var. melanogenum).